Reading from the N-terminus, the 162-residue chain is Sorting nexin-3 (162 aa).

An N-acetylalanine modification is found at Ala-2. In terms of domain architecture, PX spans 27–151 (NFLEIDVSNP…HMFLQDEIID (125 aa)). Arg-43 bears the Omega-N-methylarginine mark. Positions 70, 72, 95, and 118 each coordinate a 1,2-diacyl-sn-glycero-3-phospho-(1D-myo-inositol-3-phosphate). Position 72 is a phosphoserine (Ser-72). A Glycyl lysine isopeptide (Lys-Gly) (interchain with G-Cter in SUMO2) cross-link involves residue Lys-95. Residues 147–162 (DEIIDKSYTPSKIRHA) form a binds predominantly to PtdIns(P5) and weaker to PtdIns(P3) abd PtdIns(P4); involved in neurite outgrowth regulation region.

The protein belongs to the sorting nexin family. Interacts with VPS26A, VPS29 and VPS35; the interaction with VPS35 is direct. The association with the retromer CSC subcomplex subunits is proposed to represent a functional distinct retromer variant described as SNX3-retromer complex. Interacts with USP10 and SCNN1A. Interacts with TRFC. Interacts with SNX8; 2 molecules of SNX8 seems to associate with one molecule of SNX3. Interacts with PTPRU. Interacts with MON2 and DOP1B. In terms of processing, ubiquitinated, leading to its proteasomal degradation. Deubiquitinated by USP10.

Its subcellular location is the early endosome. It localises to the cytoplasmic vesicle. The protein localises to the phagosome. Functionally, phosphoinositide-binding protein required for multivesicular body formation. Specifically binds phosphatidylinositol 3-phosphate (PtdIns(P3)). Can also bind phosphatidylinositol 4-phosphate (PtdIns(P4)), phosphatidylinositol 5-phosphate (PtdIns(P5)) and phosphatidylinositol 3,5-biphosphate (PtdIns(3,5)P2). Plays a role in protein transport between cellular compartments. Together with RAB7A facilitates endosome membrane association of the retromer cargo-selective subcomplex (CSC/VPS). May in part act as component of the SNX3-retromer complex which mediates the retrograde endosome-to-TGN transport of WLS distinct from the SNX-BAR retromer pathway. Promotes stability and cell surface expression of epithelial sodium channel (ENAC) subunits SCNN1A and SCNN1G. Not involved in EGFR degradation. Involved in the regulation of phagocytosis in dendritic cells possibly by regulating EEA1 recruitment to the nascent phagosomes. Involved in iron homeostasis through regulation of endocytic recycling of the transferrin receptor TFRC presumably by delivering the transferrin:transferrin receptor complex to recycling endosomes; the function may involve the CSC retromer subcomplex. In the case of Salmonella enterica infection plays arole in maturation of the Salmonella-containing vacuole (SCV) and promotes recruitment of LAMP1 to SCVs. The polypeptide is Sorting nexin-3 (Homo sapiens (Human)).